A 136-amino-acid polypeptide reads, in one-letter code: Large ribosomal subunit protein uL16 (136 aa).

Belongs to the universal ribosomal protein uL16 family. In terms of assembly, part of the 50S ribosomal subunit.

In terms of biological role, binds 23S rRNA and is also seen to make contacts with the A and possibly P site tRNAs. The chain is Large ribosomal subunit protein uL16 from Salmonella agona (strain SL483).